Reading from the N-terminus, the 270-residue chain is Co-chaperone protein DjlA (270 aa).

Topologically, residues 1 to 6 (MQYWGK) are periplasmic. A helical membrane pass occupies residues 7 to 31 (IIGVAVALMMGGGFWGVVLGLLVGH). Residues 32 to 270 (MFDKARSRKM…ELIKEQKGFK (239 aa)) are Cytoplasmic-facing. In terms of domain architecture, J spans 204-270 (DACNVLGVKT…ELIKEQKGFK (67 aa)).

Homodimer.

It localises to the cell inner membrane. Functionally, regulatory DnaK co-chaperone. Direct interaction between DnaK and DjlA is needed for the induction of the wcaABCDE operon, involved in the synthesis of a colanic acid polysaccharide capsule, possibly through activation of the RcsB/RcsC phosphotransfer signaling pathway. The colanic acid capsule may help the bacterium survive conditions outside the host. The chain is Co-chaperone protein DjlA from Salmonella paratyphi A (strain ATCC 9150 / SARB42).